Reading from the N-terminus, the 360-residue chain is Cinnamyl alcohol dehydrogenase 2 (360 aa).

The 329-residue stretch at 23-351 folds into the Enoyl reductase (ER) domain; that stretch reads GVLSPFNFSR…KADVKYRFVI (329 aa). A Zn(2+)-binding site is contributed by cysteine 50. Position 52 (serine 52) interacts with an alcohol. Serine 52 lines the NADP(+) pocket. 8 residues coordinate Zn(2+): aspartate 53, histidine 72, glutamate 73, cysteine 103, cysteine 106, cysteine 109, cysteine 117, and cysteine 166. An an alcohol-binding site is contributed by histidine 72. Residues leucine 192, glycine 194, leucine 195, serine 214, threonine 215, serine 216, lysine 219, lysine 220, valine 277, alanine 279, serine 301, and arginine 348 each coordinate NADP(+).

This sequence belongs to the zinc-containing alcohol dehydrogenase family. Class-P subfamily. In terms of assembly, homodimer. Zn(2+) is required as a cofactor. Mainly expressed in young roots and, to a lower extent, in stems and leaves.

It localises to the cytoplasm. The catalysed reaction is (E)-cinnamyl alcohol + NADP(+) = (E)-cinnamaldehyde + NADPH + H(+). Functionally, alcohol dehydrogenase that catalyzes the conversion of (E)-cinnamyl alcohol to (E)-cinnamaldehyde. The sequence is that of Cinnamyl alcohol dehydrogenase 2 from Rauvolfia serpentina (Serpentine wood).